A 781-amino-acid polypeptide reads, in one-letter code: Mitochondrial inner membrane m-AAA protease component paraplegin (781 aa).

A mitochondrion-targeting transit peptide spans 1 to 43; that stretch reads MAAALLLLRGLRPGPEPRPRRLWGLLSGRGPGLSSGAGARRPY. 2 disordered regions span residues 22–56 and 103–135; these read LWGL…AAAG and TSRM…ERED. Residues 36–56 are compositionally biased toward low complexity; the sequence is GAGARRPYAARGTPVGPAAAG. The propeptide at 44-105 is removed in mature form; sequence AARGTPVGPA…GSTLYFNTSR (62 aa). Residues 106 to 144 lie on the Mitochondrial matrix side of the membrane; it reads MKQKNKDNDKPKGKTPEDDEEEKRRKEREDQMYRERLRT. Positions 109–135 are enriched in basic and acidic residues; it reads KNKDNDKPKGKTPEDDEEEKRRKERED. The helical transmembrane segment at 145-165 threads the bilayer; sequence LFIIALVMSLLNSLSTSGGSI. Residues 166 to 248 are Mitochondrial intermembrane-facing; the sequence is SWADFVNEML…DRIPVSYKRT (83 aa). Residues 249 to 269 form a helical membrane-spanning segment; that stretch reads GFFGNALYALGMTAVGLAILW. Residues 270–781 lie on the Mitochondrial matrix side of the membrane; it reads YVFRLAGMTG…ASGEEEAPAP (512 aa). Residues Ala312, Gly352, Cys353, Gly354, Lys355, Thr356, and Leu357 each contribute to the ATP site. Tyr505 is subject to 3'-nitrotyrosine. Position 574 (His574) interacts with Zn(2+). Residue Glu575 is part of the active site. The Zn(2+) site is built by His578 and Asp650. The segment at 701–781 is interaction with PPIF; the sequence is HEAKLLVAKA…ASGEEEAPAP (81 aa).

It in the N-terminal section; belongs to the AAA ATPase family. This sequence in the C-terminal section; belongs to the peptidase M41 family. Forms heterohexamers with SPG7 and AFG3L1. The m-AAA protease is either composed of homohexamers of AFG3L2 or heterohexamers of AFG3L1, AFG3L2 and/or SPG7. Component of the mitochondrial permeability transition pore complex (mPTPC), at least composed of SPG7, VDAC1 and PPIF. Interacts with MAIP1. It depends on Zn(2+) as a cofactor. Upon import into the mitochondrion, the N-terminal transit peptide is cleaved by the mitochondrial-processing peptidase (MPP) to generate an intermediate form which undergoes a second proteolytic cleavage mediated by proteases AFG3L1 and/or AFG3L2 removing an additional N-terminal fragment to generate the proteolytically active mature form. Expressed in the brain and retina (at protein level).

It localises to the mitochondrion inner membrane. It carries out the reaction ATP + H2O = ADP + phosphate + H(+). Functionally, catalytic component of the m-AAA protease, a protease that plays a key role in proteostasis of inner mitochondrial membrane proteins, and which is essential for axonal and neuron development. SPG7 possesses both ATPase and protease activities: the ATPase activity is required to unfold substrates, threading them into the internal proteolytic cavity for hydrolysis into small peptide fragments. The m-AAA protease exerts a dual role in the mitochondrial inner membrane: it mediates the processing of specific regulatory proteins and ensures protein quality control by degrading misfolded polypeptides. Mediates protein maturation of the mitochondrial ribosomal subunit MRPL32/bL32m by catalyzing the cleavage of the presequence of MRPL32/bL32m prior to assembly into the mitochondrial ribosome. Acts as a regulator of calcium in neurons by mediating degradation of SMDT1/EMRE before its assembly with the uniporter complex, limiting the availability of SMDT1/EMRE for MCU assembly and promoting efficient assembly of gatekeeper subunits with MCU. Also regulates mitochondrial calcium by catalyzing degradation of MCU. Plays a role in the formation and regulation of the mitochondrial permeability transition pore (mPTP) and its proteolytic activity is dispensable for this function. In Mus musculus (Mouse), this protein is Mitochondrial inner membrane m-AAA protease component paraplegin.